Here is a 291-residue protein sequence, read N- to C-terminus: Lysosomal amino acid transporter 1 homolog (291 aa).

Topologically, residues 1–37 are lumenal; that stretch reads MVWKKLGSRNFSSCPSGSIQWIWDVLGECAQDGWDEA. The N-linked (GlcNAc...) asparagine glycan is linked to N10. The PQ-loop 1 domain maps to 34 to 100; sequence WDEASVGLGL…LADQLPLQTY (67 aa). A helical membrane pass occupies residues 38 to 58; sequence SVGLGLISILCFAASTFPQFI. Topologically, residues 59–71 are cytoplasmic; sequence KAYKTGNMDQALS. Residues 72–92 form a helical membrane-spanning segment; that stretch reads LWFLLGWIGGDSCNLIGSFLA. The Lumenal segment spans residues 93–98; that stretch reads DQLPLQ. Residues 99–119 traverse the membrane as a helical segment; it reads TYTAVYYVLADLVMLTLYFYY. Residues 120–134 are Cytoplasmic-facing; that stretch reads KFRTRPSLLSAPINS. The chain crosses the membrane as a helical span at residues 135–155; sequence VLLFLMGMACATPLLSAAGPV. Residues 156 to 182 are Lumenal-facing; sequence AAPREAFRGRALLSVESGSKPFTRQEV. The helical transmembrane segment at 183-203 threads the bilayer; it reads IGFVIGSISSVLYLLSRLPQI. One can recognise a PQ-loop 2 domain in the interval 184-243; the sequence is GFVIGSISSVLYLLSRLPQIRTNFLRKSTQGISYSLFALVMLGNTLYGLSVLLKNPEEGQ. The Cytoplasmic segment spans residues 204–214; that stretch reads RTNFLRKSTQG. Residues 215-235 form a helical membrane-spanning segment; sequence ISYSLFALVMLGNTLYGLSVL. The Lumenal segment spans residues 236-254; sequence LKNPEEGQSEGSYLLHHLP. Residues 255–275 traverse the membrane as a helical segment; sequence WLVGSLGVLLLDTIISIQFLV. Over 276–291 the chain is Cytoplasmic; that stretch reads YRRSTAASELEPLLPS. The Di-leucine motif signature appears at 288–289; that stretch reads LL.

It belongs to the laat-1 family.

The protein localises to the lysosome membrane. Its function is as follows. Amino acid transporter that specifically mediates the pH-dependent export of the cationic amino acids arginine, histidine and lysine from lysosomes. The sequence is that of Lysosomal amino acid transporter 1 homolog from Homo sapiens (Human).